We begin with the raw amino-acid sequence, 160 residues long: Small ribosomal subunit protein uS19v (160 aa).

This sequence belongs to the universal ribosomal protein uS19 family.

The protein localises to the cytoplasm. The polypeptide is Small ribosomal subunit protein uS19v (RPS15F) (Arabidopsis thaliana (Mouse-ear cress)).